The primary structure comprises 543 residues: Chaperonin GroEL (543 aa).

Residues 29–32 (TLGP), 86–90 (DGTTT), G413, 476–478 (NAA), and D492 each bind ATP.

The protein belongs to the chaperonin (HSP60) family. As to quaternary structure, forms a cylinder of 14 subunits composed of two heptameric rings stacked back-to-back. Interacts with the co-chaperonin GroES.

It is found in the cytoplasm. The catalysed reaction is ATP + H2O + a folded polypeptide = ADP + phosphate + an unfolded polypeptide.. Its function is as follows. Together with its co-chaperonin GroES, plays an essential role in assisting protein folding. The GroEL-GroES system forms a nano-cage that allows encapsulation of the non-native substrate proteins and provides a physical environment optimized to promote and accelerate protein folding. In Streptococcus pyogenes serotype M18 (strain MGAS8232), this protein is Chaperonin GroEL.